Consider the following 436-residue polypeptide: UPF0597 protein YhaM (436 aa).

The protein belongs to the UPF0597 family.

This Salmonella gallinarum (strain 287/91 / NCTC 13346) protein is UPF0597 protein YhaM.